A 529-amino-acid polypeptide reads, in one-letter code: MERLAGRVMLAGGMSRAVMAIAAGAVGALALPPFGFFAALFFSFTLLVWLVDGCTGKPGGGLFSRILPAFGIGWCFGFGYFVAGLWWLGNALLLEADEFAWALPLAILGLPALLALFYGFAVAAANLLWSDGLGRIAALAAAFGVSEWLRSFLATGFPWNAIGYGIMPIPIMMQSAHLLGLLSITTLAVFIFASPALIGTKKGMGPGLALAGLLLAAHFGYGFYRLQTPAETPADALTVRIVQPAIDQSRKMLNTDRAEIFAEHLRLSALPPGEGKKRPDIIVWPETSVPFILTQNPDALAEIASTLEDGQVLFTGAVRMEDQGAGRPPRYYNSVYAIDSQGEIIGATDKVHLTPFGEYVPFEGILREFGIDNVIALPGGFSAASSRTPLTLPSGKTFYPLICYEIIFPGEMTPGLQGAAAILNVTNDGWFGDTPGPYQHFLQARVRAVETGVPVIRGANTGISAVIDPYGRIIAGLDYGRVGILDATLSGGSNDAFTYDTHRTYFWLIFSILMIVAVFPALSFARRQN.

5 helical membrane-spanning segments follow: residues 8–28 (VMLA…AVGA), 66–86 (ILPA…AGLW), 105–125 (LAIL…VAAA), 178–198 (LLGL…PALI), and 203–223 (GMGP…GYGF). Residues 242-491 (VQPAIDQSRK…VGILDATLSG (250 aa)) form the CN hydrolase domain. The Proton acceptor role is filled by glutamate 286. Lysine 350 is an active-site residue. The active-site Nucleophile is cysteine 403. A helical membrane pass occupies residues 505–525 (YFWLIFSILMIVAVFPALSFA).

It belongs to the CN hydrolase family. Apolipoprotein N-acyltransferase subfamily.

The protein resides in the cell inner membrane. The catalysed reaction is N-terminal S-1,2-diacyl-sn-glyceryl-L-cysteinyl-[lipoprotein] + a glycerophospholipid = N-acyl-S-1,2-diacyl-sn-glyceryl-L-cysteinyl-[lipoprotein] + a 2-acyl-sn-glycero-3-phospholipid + H(+). The protein operates within protein modification; lipoprotein biosynthesis (N-acyl transfer). Its function is as follows. Catalyzes the phospholipid dependent N-acylation of the N-terminal cysteine of apolipoprotein, the last step in lipoprotein maturation. This is Apolipoprotein N-acyltransferase from Agrobacterium fabrum (strain C58 / ATCC 33970) (Agrobacterium tumefaciens (strain C58)).